Consider the following 122-residue polypeptide: Large ribosomal subunit protein uL14 (122 aa).

Belongs to the universal ribosomal protein uL14 family. Part of the 50S ribosomal subunit. Forms a cluster with proteins L3 and L19. In the 70S ribosome, L14 and L19 interact and together make contacts with the 16S rRNA in bridges B5 and B8.

Binds to 23S rRNA. Forms part of two intersubunit bridges in the 70S ribosome. This is Large ribosomal subunit protein uL14 from Campylobacter fetus subsp. fetus (strain 82-40).